Here is a 270-residue protein sequence, read N- to C-terminus: Formamidopyrimidine-DNA glycosylase (270 aa).

Pro2 serves as the catalytic Schiff-base intermediate with DNA. Glu3 functions as the Proton donor in the catalytic mechanism. Residue Lys58 is the Proton donor; for beta-elimination activity of the active site. 3 residues coordinate DNA: His91, Arg110, and Arg151. An FPG-type zinc finger spans residues Ala236 to Arg270. Arg260 functions as the Proton donor; for delta-elimination activity in the catalytic mechanism.

The protein belongs to the FPG family. As to quaternary structure, monomer. Zn(2+) is required as a cofactor.

The enzyme catalyses Hydrolysis of DNA containing ring-opened 7-methylguanine residues, releasing 2,6-diamino-4-hydroxy-5-(N-methyl)formamidopyrimidine.. It carries out the reaction 2'-deoxyribonucleotide-(2'-deoxyribose 5'-phosphate)-2'-deoxyribonucleotide-DNA = a 3'-end 2'-deoxyribonucleotide-(2,3-dehydro-2,3-deoxyribose 5'-phosphate)-DNA + a 5'-end 5'-phospho-2'-deoxyribonucleoside-DNA + H(+). Its function is as follows. Involved in base excision repair of DNA damaged by oxidation or by mutagenic agents. Acts as a DNA glycosylase that recognizes and removes damaged bases. Has a preference for oxidized purines, such as 7,8-dihydro-8-oxoguanine (8-oxoG). Has AP (apurinic/apyrimidinic) lyase activity and introduces nicks in the DNA strand. Cleaves the DNA backbone by beta-delta elimination to generate a single-strand break at the site of the removed base with both 3'- and 5'-phosphates. The chain is Formamidopyrimidine-DNA glycosylase from Acidithiobacillus ferrooxidans (strain ATCC 23270 / DSM 14882 / CIP 104768 / NCIMB 8455) (Ferrobacillus ferrooxidans (strain ATCC 23270)).